Consider the following 250-residue polypeptide: 4-hydroxy-tetrahydrodipicolinate reductase (250 aa).

NAD(+)-binding positions include 10 to 15 (GVKGRI), 78 to 80 (GTT), and 105 to 108 (APNF). Catalysis depends on His135, which acts as the Proton donor/acceptor. His136 lines the (S)-2,3,4,5-tetrahydrodipicolinate pocket. The active-site Proton donor is the Lys139. 145 to 146 (GT) is a (S)-2,3,4,5-tetrahydrodipicolinate binding site.

It belongs to the DapB family.

The protein localises to the cytoplasm. The catalysed reaction is (S)-2,3,4,5-tetrahydrodipicolinate + NAD(+) + H2O = (2S,4S)-4-hydroxy-2,3,4,5-tetrahydrodipicolinate + NADH + H(+). It carries out the reaction (S)-2,3,4,5-tetrahydrodipicolinate + NADP(+) + H2O = (2S,4S)-4-hydroxy-2,3,4,5-tetrahydrodipicolinate + NADPH + H(+). The protein operates within amino-acid biosynthesis; L-lysine biosynthesis via DAP pathway; (S)-tetrahydrodipicolinate from L-aspartate: step 4/4. Functionally, catalyzes the conversion of 4-hydroxy-tetrahydrodipicolinate (HTPA) to tetrahydrodipicolinate. The chain is 4-hydroxy-tetrahydrodipicolinate reductase from Streptomyces avermitilis (strain ATCC 31267 / DSM 46492 / JCM 5070 / NBRC 14893 / NCIMB 12804 / NRRL 8165 / MA-4680).